A 283-amino-acid polypeptide reads, in one-letter code: 3-methyl-2-oxobutanoate hydroxymethyltransferase (283 aa).

Residues Asp-46 and Asp-85 each contribute to the Mg(2+) site. 3-methyl-2-oxobutanoate-binding positions include 46-47 (DS), Asp-85, and Lys-115. Glu-117 lines the Mg(2+) pocket. Glu-184 functions as the Proton acceptor in the catalytic mechanism.

Belongs to the PanB family. In terms of assembly, homodecamer; pentamer of dimers. It depends on Mg(2+) as a cofactor.

Its subcellular location is the cytoplasm. The catalysed reaction is 3-methyl-2-oxobutanoate + (6R)-5,10-methylene-5,6,7,8-tetrahydrofolate + H2O = 2-dehydropantoate + (6S)-5,6,7,8-tetrahydrofolate. Its pathway is cofactor biosynthesis; (R)-pantothenate biosynthesis; (R)-pantoate from 3-methyl-2-oxobutanoate: step 1/2. In terms of biological role, catalyzes the reversible reaction in which hydroxymethyl group from 5,10-methylenetetrahydrofolate is transferred onto alpha-ketoisovalerate to form ketopantoate. The chain is 3-methyl-2-oxobutanoate hydroxymethyltransferase from Acetivibrio thermocellus (strain ATCC 27405 / DSM 1237 / JCM 9322 / NBRC 103400 / NCIMB 10682 / NRRL B-4536 / VPI 7372) (Clostridium thermocellum).